Here is a 406-residue protein sequence, read N- to C-terminus: Zinc finger CCCH domain-containing protein 15 homolog (406 aa).

The segment covering 1 to 11 (MPPKKAPAGPS) has biased composition (low complexity). The disordered stretch occupies residues 1–70 (MPPKKAPAGP…DKKKDEKEKK (70 aa)). The segment covering 12 to 28 (KKTEQKKKEKVIEDKTF) has biased composition (basic and acidic residues). A compositionally biased stretch (low complexity) spans 38–50 (QQKFIQQVQKQVQ). Positions 56–70 (PRQDGDKKKDEKEKK) are enriched in basic and acidic residues. Positions 57-82 (RQDGDKKKDEKEKKLADLREMASIFK) form a coiled coil. C3H1-type zinc fingers lie at residues 94–121 (DPKS…HDLS) and 166–203 (PTTE…HALP). Residues 336-382 (VDGSGTIASSTRLLDQATEAAKTAAAEDGAASDDENPSSSAPANDAA) are disordered. 2 stretches are compositionally biased toward low complexity: residues 352–364 (ATEA…AEDG) and 372–382 (PSSSAPANDAA).

This sequence belongs to the ZC3H15/TMA46 family.

In Drosophila pseudoobscura pseudoobscura (Fruit fly), this protein is Zinc finger CCCH domain-containing protein 15 homolog.